The following is a 319-amino-acid chain: mRNA decay activator protein ZFP36 (319 aa).

The tract at residues 1-15 (MDLSAIYESLQSMSH) is necessary for nuclear export. A necessary and sufficient for the association with mRNA decay enzymes and mRNA decay activation region spans residues 1–92 (MDLSAIYESL…PTSPTATPTT (92 aa)). 2 necessary for localization of ARE-containing mRNAs to processing bodies (PBs) regions span residues 1–166 (MDLS…DLAL) and 92–319 (TSSR…SVSE). Ser52 carries the post-translational modification Phosphoserine; by MAPKAPK2. The residue at position 58 (Ser58) is a Phosphoserine. Residues 63-67 (PPPPG) form a P-P-P-P-G repeat. A compositionally biased stretch (pro residues) spans 65–84 (PPGFAPLAPRPGPELSPSPT). The segment at 65-95 (PPGFAPLAPRPGPELSPSPTSPTATPTTSSR) is disordered. Residues Ser80 and Ser82 each carry the phosphoserine modification. Thr84 carries the phosphothreonine modification. Phosphoserine is present on Ser85. Low complexity predominate over residues 85 to 94 (SPTATPTTSS). The tract at residues 87–160 (TATPTTSSRY…GSRCHFIHNP (74 aa)) is necessary for nuclear localization. Positions 89–165 (TPTTSSRYKT…FIHNPTEDLA (77 aa)) are necessary for RNA-binding. 2 consecutive C3H1-type zinc fingers follow at residues 95–123 (RYKT…HGLG) and 133–161 (KYKT…HNPT). The tract at residues 95 to 186 (RYKTELCRTY…ISFSGLPSGR (92 aa)) is necessary for interaction with PABPN1. Residues 166-319 (LPGQPHVLRQ…PIFNRISVSE (154 aa)) are necessary for mRNA decay activation. Ser178 is modified (phosphoserine; by MAPKAPK2). Residues 179–188 (FSGLPSGRRS) show a composition bias toward low complexity. Positions 179–309 (FSGLPSGRRS…PQTPAPPRRL (131 aa)) are disordered. Ser189 carries the phosphoserine modification. The P-P-P-P-G repeat unit spans residues 190–194 (PPPPG). Over residues 196 to 208 (SGPSLSSCSFSPS) the composition is skewed to low complexity. Residue Ser210 is modified to Phosphoserine. One copy of the P-P-P-P-G repeat lies at 211–215 (PPPPG). A Phosphoserine; by MAPK1; in vitro modification is found at Ser220. Residue Thr250 is modified to Phosphothreonine. A phosphoserine mark is found at Ser269, Ser289, and Ser316. Low complexity predominate over residues 279–289 (SSGSSLGGSDS). Positions 305–319 (PPRRLPIFNRISVSE) are interaction with CNOT1.

As to quaternary structure, associates with cytoplasmic CCR4-NOT and PAN2-PAN3 deadenylase complexes to trigger ARE-containing mRNA deadenylation and decay processes. Part of a mRNA decay activation complex at least composed of poly(A)-specific exoribonucleases CNOT6, EXOSC2 and XRN1 and mRNA-decapping enzymes DCP1A and DCP2. Associates with the RNA exosome complex. Interacts (via phosphorylated form) with 14-3-3 proteins; these interactions promote exclusion of ZFP36 from cytoplasmic stress granules in response to arsenite treatment in a MAPKAPK2-dependent manner and does not prevent CCR4-NOT deadenylase complex recruitment or ZFP36-induced ARE-containing mRNA deadenylation and decay processes. Interacts with 14-3-3 proteins; these interactions occur in response to rapamycin in an Akt-dependent manner. Interacts with AGO2 and AGO4. Interacts (via C-terminus) with CNOT1; this interaction occurs in a RNA-independent manner and induces mRNA deadenylation. Interacts (via N-terminus) with CNOT6. Interacts with CNOT6L. Interacts (via C-terminus) with CNOT7; this interaction occurs in a RNA-independent manner, induces mRNA deadenylation and is inhibited in a phosphorylation MAPKAPK2-dependent manner. Interacts (via unphosphorylated form) with CNOT8; this interaction occurs in a RNA-independent manner and is inhibited in a phosphorylation MAPKAPK2-dependent manner. Interacts with DCP1A. Interacts (via N-terminus) with DCP2. Interacts with EDC3. Interacts (via N-terminus) with EXOSC2. Interacts with heat shock 70 kDa proteins. Interacts with KHSRP; this interaction increases upon cytokine-induced treatment. Interacts with MAP3K4; this interaction enhances the association with SH3KBP1/CIN85. Interacts with MAPKAPK2; this interaction occurs upon skeletal muscle satellite cell activation. Interacts with NCL. Interacts with NUP214; this interaction increases upon lipopolysaccharide (LPS) stimulation. Interacts with PABPC1; this interaction occurs in a RNA-dependent manner. Interacts (via hypophosphorylated form) with PABPN1 (via RRM domain and C-terminal arginine-rich region); this interaction occurs in the nucleus in a RNA-independent manner, decreases in presence of single-stranded poly(A) RNA-oligomer and in a p38 MAPK-dependent-manner and inhibits nuclear poly(A) tail synthesis. Interacts with PAN2. Interacts (via C3H1-type zinc finger domains) with PKM. Interacts (via C3H1-type zinc finger domains) with nuclear RNA poly(A) polymerase. Interacts with PPP2CA; this interaction occurs in LPS-stimulated cells and induces ZFP36 dephosphorylation, and hence may promote ARE-containing mRNAs decay. Interacts (via C-terminus) with PRR5L (via C-terminus); this interaction may accelerate ZFP36-mediated mRNA decay during stress. Interacts (via C-terminus) with SFN; this interaction occurs in a phosphorylation-dependent manner. Interacts (via extreme C-terminal region) with SH3KBP1/CIN85 (via SH3 domains); this interaction enhances MAP3K4-induced phosphorylation of ZFP36 at Ser-58 and Ser-85 and does not alter neither ZFP36 binding to ARE-containing transcripts nor TNF-alpha mRNA decay. Interacts with XRN1. Interacts (via C-terminus and Ser-178 phosphorylated form) with YWHAB; this interaction occurs in a p38/MAPKAPK2-dependent manner, increases cytoplasmic localization of ZFP36 and protects ZFP36 from Ser-178 dephosphorylation by serine/threonine phosphatase 2A, and hence may be crucial for stabilizing ARE-containing mRNAs. Interacts (via phosphorylated form) with YWHAE. Interacts (via C-terminus) with YWHAG; this interaction occurs in a phosphorylation-dependent manner. Interacts with YWHAH; this interaction occurs in a phosphorylation-dependent manner. Interacts with YWHAQ; this interaction occurs in a phosphorylation-dependent manner. Interacts with (via C-terminus) YWHAZ; this interaction occurs in a phosphorylation-dependent manner. Does not interact with SH3KBP1. Interacts (via the 4EHP-binding motif) with EIF4E2; the interaction is direct. Interacts (via P-P-P-P-G repeats) with GIGYF2; the interaction is direct. Phosphorylated. Phosphorylation at serine and/or threonine residues occurs in a p38 MAPK- and MAPKAPK2-dependent manner. Phosphorylated by MAPKAPK2 at Ser-52 and Ser-178; phosphorylation increases its stability and cytoplasmic localization, promotes binding to 14-3-3 adapter proteins and inhibits the recruitment of cytoplasmic CCR4-NOT and PAN2-PAN3 deadenylase complexes to the mRNA decay machinery, thereby inhibiting ZFP36-induced ARE-containing mRNA deadenylation and decay processes. Phosphorylation by MAPKAPK2 does not impair ARE-containing RNA-binding. Phosphorylated in a MAPKAPK2- and p38 MAPK-dependent manner upon skeletal muscle satellite cell activation; this phosphorylation inhibits ZFP36-mediated mRNA decay activity, and hence stabilizes MYOD1 mRNA. Phosphorylated by MAPK1 upon mitogen stimulation. Phosphorylated at Ser-58 and Ser-85; these phosphorylations increase in a SH3KBP1-dependent manner. Phosphorylated at serine and threonine residues in a pyruvate kinase PKM- and p38 MAPK-dependent manner. Phosphorylation at Ser-52 may participate in the PKM-mediated degradation of ZFP36 in a p38 MAPK-dependent manner. Dephosphorylated by serine/threonine phosphatase 2A at Ser-178. In terms of processing, ubiquitinated; pyruvate kinase (PKM)-dependent ubiquitination leads to proteasomal degradation through a p38 MAPK signaling pathway. Expressed in skeletal muscle satellite cells. Strongly expressed in differentiated adipocytes compared to preadipocytes (at protein level). Expressed in embryonic stem cells (ESCs). Expressed in heart, placenta, kidney, intestine, liver, lung, thymus, fat and spleen.

It is found in the nucleus. It localises to the cytoplasm. The protein localises to the cytoplasmic granule. The protein resides in the P-body. In terms of biological role, zinc-finger RNA-binding protein that destabilizes numerous cytoplasmic AU-rich element (ARE)-containing mRNA transcripts by promoting their poly(A) tail removal or deadenylation, and hence provide a mechanism for attenuating protein synthesis. Acts as an 3'-untranslated region (UTR) ARE mRNA-binding adapter protein to communicate signaling events to the mRNA decay machinery. Recruits deadenylase CNOT7 (and probably the CCR4-NOT complex) via association with CNOT1, and hence promotes ARE-mediated mRNA deadenylation. Also functions by recruiting components of the cytoplasmic RNA decay machinery to the bound ARE-containing mRNAs. Self-regulates by destabilizing its own mRNA. Binds to 3'-UTR ARE of numerous mRNAs and of its own mRNA. Plays a role in anti-inflammatory responses; suppresses tumor necrosis factor (TNF)-alpha production by stimulating ARE-mediated TNF-alpha mRNA decay and several other inflammatory ARE-containing mRNAs in interferon (IFN)- and/or lipopolysaccharide (LPS)-induced macrophages. Also plays a role in the regulation of dendritic cell maturation at the post-transcriptional level, and hence operates as part of a negative feedback loop to limit the inflammatory response. Promotes ARE-mediated mRNA decay of hypoxia-inducible factor HIF1A mRNA during the response of endothelial cells to hypoxia. Positively regulates early adipogenesis of preadipocytes by promoting ARE-mediated mRNA decay of immediate early genes (IEGs). Negatively regulates hematopoietic/erythroid cell differentiation by promoting ARE-mediated mRNA decay of the transcription factor STAT5B mRNA. Plays a role in maintaining skeletal muscle satellite cell quiescence by promoting ARE-mediated mRNA decay of the myogenic determination factor MYOD1 mRNA. Also associates with and regulates the expression of non-ARE-containing target mRNAs at the post-transcriptional level, such as MHC class I mRNAs. Participates in association with argonaute RISC catalytic components in the ARE-mediated mRNA decay mechanism; assists microRNA (miRNA) targeting ARE-containing mRNAs. May also play a role in the regulation of cytoplasmic mRNA decapping; enhances decapping of ARE-containing RNAs, in vitro. Involved in the delivery of target ARE-mRNAs to processing bodies (PBs). In addition to its cytosolic mRNA-decay function, affects nuclear pre-mRNA processing. Negatively regulates nuclear poly(A)-binding protein PABPN1-stimulated polyadenylation activity on ARE-containing pre-mRNA during LPS-stimulated macrophages. Also involved in the regulation of stress granule (SG) and P-body (PB) formation and fusion. Plays a role in the regulation of keratinocyte proliferation, differentiation and apoptosis. Plays a role as a tumor suppressor by inhibiting cell proliferation in breast cancer cells. This chain is mRNA decay activator protein ZFP36, found in Mus musculus (Mouse).